Reading from the N-terminus, the 482-residue chain is 6-phosphogluconate dehydrogenase, decarboxylating (482 aa).

NADP(+) is bound by residues 17 to 22, 40 to 42, 82 to 84, and asparagine 110; these read GLAVMG, NRS, and VKA. Residues asparagine 110 and 136-138 each bind substrate; that span reads SGG. Lysine 193 (proton acceptor) is an active-site residue. 196–197 is a binding site for substrate; that stretch reads HN. Residue glutamate 200 is the Proton donor of the active site. Substrate contacts are provided by tyrosine 201, lysine 272, arginine 299, arginine 457, and histidine 463.

This sequence belongs to the 6-phosphogluconate dehydrogenase family. In terms of assembly, homodimer.

It carries out the reaction 6-phospho-D-gluconate + NADP(+) = D-ribulose 5-phosphate + CO2 + NADPH. The protein operates within carbohydrate degradation; pentose phosphate pathway; D-ribulose 5-phosphate from D-glucose 6-phosphate (oxidative stage): step 3/3. Catalyzes the oxidative decarboxylation of 6-phosphogluconate to ribulose 5-phosphate and CO(2), with concomitant reduction of NADP to NADPH. This chain is 6-phosphogluconate dehydrogenase, decarboxylating (gnd), found in Synechocystis sp. (strain ATCC 27184 / PCC 6803 / Kazusa).